The chain runs to 117 residues: Immunoglobulin kappa variable 1-12 (117 aa).

Positions 1 to 22 (MDMRVPAQLLGLLLLWFPGSRC) are cleaved as a signal peptide. The segment at 23 to 45 (DIQMTQSPSSVSASVGDRVTITC) is framework-1. Residues 24–117 (IQMTQSPSSV…YYCQQANSFP (94 aa)) enclose the Ig-like domain. An intrachain disulfide couples Cys45 to Cys110. Positions 46-56 (RASQGISSWLA) are complementarity-determining-1. A framework-2 region spans residues 57 to 71 (WYQQKPGKAPKLLIY). A complementarity-determining-2 region spans residues 72 to 78 (AASSLQS). The framework-3 stretch occupies residues 79–110 (GVPSRFSGSGSGTDFTLTISSLQPEDFATYYC). The interval 111–117 (QQANSFP) is complementarity-determining-3.

In terms of assembly, immunoglobulins are composed of two identical heavy chains and two identical light chains; disulfide-linked.

The protein resides in the secreted. It localises to the cell membrane. V region of the variable domain of immunoglobulin light chains that participates in the antigen recognition. Immunoglobulins, also known as antibodies, are membrane-bound or secreted glycoproteins produced by B lymphocytes. In the recognition phase of humoral immunity, the membrane-bound immunoglobulins serve as receptors which, upon binding of a specific antigen, trigger the clonal expansion and differentiation of B lymphocytes into immunoglobulins-secreting plasma cells. Secreted immunoglobulins mediate the effector phase of humoral immunity, which results in the elimination of bound antigens. The antigen binding site is formed by the variable domain of one heavy chain, together with that of its associated light chain. Thus, each immunoglobulin has two antigen binding sites with remarkable affinity for a particular antigen. The variable domains are assembled by a process called V-(D)-J rearrangement and can then be subjected to somatic hypermutations which, after exposure to antigen and selection, allow affinity maturation for a particular antigen. This Homo sapiens (Human) protein is Immunoglobulin kappa variable 1-12.